The primary structure comprises 523 residues: Translation initiation factor eIF2B subunit delta (523 aa).

Positions M1–Y147 are disordered. Residue A2 is modified to N-acetylalanine. Position 12 is a phosphoserine (S12). Residues E30–R40 show a composition bias toward basic and acidic residues. Residues K41–K51 show a composition bias toward basic residues. T86 is subject to Phosphothreonine. A compositionally biased stretch (basic and acidic residues) spans P87 to E121. Residue S130 is modified to Phosphoserine. A may bind the chemical integrated stress response (ISR) inhibitor ISRIB region spans residues R170–L179.

Belongs to the eIF-2B alpha/beta/delta subunits family. Component of the translation initiation factor 2B (eIF2B) complex which is a heterodecamer of two sets of five different subunits: alpha, beta, gamma, delta and epsilon. Subunits alpha, beta and delta comprise a regulatory subcomplex and subunits epsilon and gamma comprise a catalytic subcomplex. Within the complex, the hexameric regulatory complex resides at the center, with the two heterodimeric catalytic subcomplexes bound on opposite sides.

The protein resides in the cytoplasm. Its subcellular location is the cytosol. Activated by the chemical integrated stress response (ISR) inhibitor ISRIB which stimulates guanine nucleotide exchange factor activity for both phosphorylated and unphosphorylated eIF2. In terms of biological role, acts as a component of the translation initiation factor 2B (eIF2B) complex, which catalyzes the exchange of GDP for GTP on eukaryotic initiation factor 2 (eIF2) gamma subunit. Its guanine nucleotide exchange factor activity is repressed when bound to eIF2 complex phosphorylated on the alpha subunit, thereby limiting the amount of methionyl-initiator methionine tRNA available to the ribosome and consequently global translation is repressed. The protein is Translation initiation factor eIF2B subunit delta (EIF2B4) of Homo sapiens (Human).